The primary structure comprises 979 residues: Zinc finger BED domain-containing protein 6 (979 aa).

Residues 1–89 (MSVCTLSVPV…ILAKKFSKDL (89 aa)) form a required for nucleolar localization region. A BED-type 1 zinc finger spans residues 130 to 187 (AKTSIVWHFFHVDPQYTWRAICNLCEKSVSRGKPGSHLGTSTLQRHLQARHSPHWTRA). Zn(2+) contacts are provided by C151, C154, H175, and H180. Residues 207–232 (PSSGSNGSFEYIPTDPLDDNRMGKKH) are disordered. The BED-type 2 zinc-finger motif lies at 264–321 (AKTSAVWNFFYTDPQHISRAVCNICKRSVSRGRPGSHLGTSTLQRHLQATHPIHWAVA). C285, C288, H309, and H314 together coordinate Zn(2+). Residues 333-383 (DEAETERSDLLSDTLHGEKSTGSQDLTAEDLSDSDSDEPMLEVENRSESPI) are disordered. The segment covering 337–351 (TERSDLLSDTLHGEK) has biased composition (basic and acidic residues). Over residues 359–373 (TAEDLSDSDSDEPML) the composition is skewed to acidic residues. Phosphoserine is present on S381. The HATC (Hobo-Ac-Tam3) domain stretch occupies residues 866–948 (VVDEYFKEKY…EQLMFLKMNL (83 aa)).

As to expression, expressed in pancreatic islet cells (at protein level).

The protein localises to the nucleus. It localises to the nucleolus. It is found in the cytoplasm. In terms of biological role, transcriptional repressor which binds to the consensus sequence 5'-GCTCGC-3', transcription regulation may be tissue-specific. Regulates the expression of target genes such as: IGF2, PGAP6/TMEM8, ENHO, and PIANP. Acts as a transcriptional repressor of growth factor IGF2, thereby negatively regulating postnatal growth of muscles and internal organs, especially in females. Negatively regulates myoblast differentiation and myoblast mitochondrial activity via its regulation of IGF2 transcription. Negatively regulates the cell cycle of myoblasts, potentially via transcriptional regulation of the E2F family of transcription factors such as: E2F1 and E2F2. Positively regulates the cell cycle and survival of pancreatic beta cells. Binds to the CDH2 gene and may directly repress CDH2 transcription. Probably by controlling CDH2 expression, regulates pancreatic beta cell adhesion, and formation of cell-to-cell junctions between pancreatic beta cells and neural crest stem cells. May also play a role in embryonic beta cell differentiation. May play a role in insulin sensitivity and glucose clearance. This is Zinc finger BED domain-containing protein 6 from Homo sapiens (Human).